The chain runs to 106 residues: MKRLIFVIGVFIVALALSAFHWVGIIIGGLIVGYFSKNLKEAVAAGLALSLFIFGAFLAYLAYMGMLEKFLTLSPLPYISILLCMALAVISATITNFFSPFAVKQS.

3 consecutive transmembrane segments (helical) span residues 5-27 (IFVI…GIII), 42-64 (AVAA…LAYM), and 76-98 (LPYI…TNFF).

Its subcellular location is the cell membrane. This is an uncharacterized protein from Archaeoglobus fulgidus (strain ATCC 49558 / DSM 4304 / JCM 9628 / NBRC 100126 / VC-16).